We begin with the raw amino-acid sequence, 188 residues long: Transmembrane protein 160 (188 aa).

Residues 1–96 (MGGGWWWARV…ISFMQSDMGR (96 aa)) constitute a mitochondrion transit peptide. The disordered stretch occupies residues 21-53 (SLQPPQRPRSGGARGSFAPGHGPRAGASPPPVS). At S48 the chain carries Phosphoserine. Helical transmembrane passes span 102 to 122 (FFLL…VGLA) and 135 to 155 (AAAG…AVGL). A disordered region spans residues 168-188 (PEDDGAASTEGPDEAGRPPPE).

Belongs to the TMEM160 family. As to expression, expressed in peripheral sensory neurons of dorsal root ganglia (DRG).

It localises to the mitochondrion inner membrane. The chain is Transmembrane protein 160 from Mus musculus (Mouse).